The chain runs to 322 residues: 4-diphosphocytidyl-2-C-methyl-D-erythritol kinase (322 aa).

Lysine 18 is an active-site residue. 130-140 (PMGAGLGGGSS) is a binding site for ATP. Aspartate 172 is a catalytic residue.

This sequence belongs to the GHMP kinase family. IspE subfamily.

The catalysed reaction is 4-CDP-2-C-methyl-D-erythritol + ATP = 4-CDP-2-C-methyl-D-erythritol 2-phosphate + ADP + H(+). The protein operates within isoprenoid biosynthesis; isopentenyl diphosphate biosynthesis via DXP pathway; isopentenyl diphosphate from 1-deoxy-D-xylulose 5-phosphate: step 3/6. Its function is as follows. Catalyzes the phosphorylation of the position 2 hydroxy group of 4-diphosphocytidyl-2C-methyl-D-erythritol. The polypeptide is 4-diphosphocytidyl-2-C-methyl-D-erythritol kinase (Psychrobacter arcticus (strain DSM 17307 / VKM B-2377 / 273-4)).